We begin with the raw amino-acid sequence, 494 residues long: DUF21 domain-containing protein At4g14240 (494 aa).

Residues 1–43 (MHLINAVAAARILSGIGQSNGNNGGEAIPFGSFEWITYAGISC) lie on the Extracellular side of the membrane. Residues 31–213 (GSFEWITYAG…GKGGELTHDE (183 aa)) form the CNNM transmembrane domain. The chain crosses the membrane as a helical span at residues 44 to 64 (FLVLFAGIMSGLTLGLMSLGL). At 65–93 (VELEILQRSGTPNEKKQAAAIFPVVQKQH) the chain is on the cytoplasmic side. The chain crosses the membrane as a helical span at residues 94–114 (QLLVTLLLCNAMAMEGLPIYL). The Extracellular segment spans residues 115–121 (DKLFNEY). The helical transmembrane segment at 122–142 (VAIILSVTFVLAFGEVIPQAI) threads the bilayer. The Cytoplasmic segment spans residues 143–159 (CTRYGLAVGANFVWLVR). The helical transmembrane segment at 160–180 (ILMTLCYPIAFPIGKILDLVL) threads the bilayer. The Extracellular portion of the chain corresponds to 181–494 (GHNDALFRRA…TITEPIRRNN (314 aa)). CBS domains follow at residues 232-292 (MTPI…TETL), 297-352 (CIRR…SNDS), and 364-425 (GNHD…IVDE). Asn350 and Asn385 each carry an N-linked (GlcNAc...) asparagine glycan. Residues 459–494 (QKGTGGQNKQGQTNKVPGQEQDKMLGTITEPIRRNN) form a disordered region.

Its subcellular location is the membrane. This chain is DUF21 domain-containing protein At4g14240 (CBSDUF1), found in Arabidopsis thaliana (Mouse-ear cress).